The sequence spans 630 residues: Differentially expressed in FDCP 6 (630 aa).

Tyr210 is modified (phosphotyrosine). The region spanning 216 to 312 is the PH domain; it reads DVLKQGYLWK…WTAAIQTAIR (97 aa). Position 225 is an N6-acetyllysine (Lys225). Disordered regions lie at residues 318 to 341, 378 to 418, and 552 to 630; these read KTSL…RRRA, LQEE…ELKK, and HPIE…APGN. Composition is skewed to basic and acidic residues over residues 331–341 and 378–392; these read EQREQRERRRA and LQEE…HKEL. Residues 588–606 are compositionally biased toward polar residues; sequence WGSQGNRTLSVNSSEQKSL. Ser590 is modified (phosphoserine). The span at 620–630 shows a compositional bias: basic and acidic residues; it reads QEEKLDPAPGN.

As to quaternary structure, interacts with IRF4, activated RAC1 and F-actin. Both the phosphorylated and non-phosphorylated forms bind phosphatidylinositol 3,4,5-trisphosphate (PtdInsP3). Interacts with ZAP70. Interacts with RAB11A. Post-translationally, tyrosine-phosphorylated by tyrosine-protein kinase LCK in response to T-cell activation. As to expression, thymus.

It localises to the cytoplasm. The protein localises to the cell membrane. It is found in the nucleus. Its subcellular location is the cytoskeleton. The protein resides in the perinuclear region. It localises to the cell projection. The protein localises to the filopodium. Phosphatidylinositol 3,4,5-trisphosphate-dependent guanine nucleotide exchange factor (GEF) which plays a role in the activation of Rho GTPases RAC1, RhoA and CDC42. Can regulate cell morphology in cooperation with activated RAC1. Involved in immune homeostasis by ensuring proper trafficking and availability of T-cell regulator CTLA-4 at T-cell surface. Plays a role in Th2 (T helper cells) development and/or activation, perhaps by interfering with ZAP70 signaling. Required for optimal T-cell effector function, lymphocyte homeostasis and the prevention of systemic autoimmunity. This Mus musculus (Mouse) protein is Differentially expressed in FDCP 6 (Def6).